The sequence spans 502 residues: Mannitol 2-dehydrogenase (502 aa).

Residue 37–48 (IVHIGVGGFHRA) coordinates NAD(+).

Belongs to the mannitol dehydrogenase family. Monomer.

The catalysed reaction is D-mannitol + NAD(+) = D-fructose + NADH + H(+). Catalyzes the NAD(H)-dependent interconversion of D-fructose and D-mannitol in the mannitol metabolic pathway. The polypeptide is Mannitol 2-dehydrogenase (Aspergillus fumigatus (strain CBS 144.89 / FGSC A1163 / CEA10) (Neosartorya fumigata)).